A 563-amino-acid polypeptide reads, in one-letter code: Methylcrotonoyl-CoA carboxylase beta chain, mitochondrial (563 aa).

The N-terminal 22 residues, 1–22, are a transit peptide targeting the mitochondrion; sequence MWGALRSALRPCCRAAVPPQRA. The 258-residue stretch at 49–306 folds into the CoA carboxyltransferase N-terminal domain; it reads MKALVSQLHE…QKKMDVTIEP (258 aa). The interval 49 to 555 is carboxyltransferase; that stretch reads MKALVSQLHE…SAALNAPIQR (507 aa). Residue lysine 70 is modified to N6-acetyllysine; alternate. Lysine 70 bears the N6-succinyllysine; alternate mark. An N6-succinyllysine modification is found at lysine 141. In terms of domain architecture, CoA carboxyltransferase C-terminal spans 309-555; it reads EPLFPADELY…SAALNAPIQR (247 aa). Residues 343 to 372 are acyl-CoA binding; it reads RFNEFKALYGDTLVTGFARIFGYPVGIIGN. N6-succinyllysine is present on lysine 433. At lysine 495 the chain carries N6-acetyllysine; alternate. At lysine 495 the chain carries N6-succinyllysine; alternate. At lysine 511 the chain carries N6-acetyllysine.

This sequence belongs to the AccD/PCCB family. As to quaternary structure, probably a dodecamer composed of six biotin-containing alpha subunits (MCCC1) and six beta (MCCC2) subunits.

Its subcellular location is the mitochondrion matrix. It carries out the reaction 3-methylbut-2-enoyl-CoA + hydrogencarbonate + ATP = 3-methyl-(2E)-glutaconyl-CoA + ADP + phosphate + H(+). It functions in the pathway amino-acid degradation; L-leucine degradation; (S)-3-hydroxy-3-methylglutaryl-CoA from 3-isovaleryl-CoA: step 2/3. Its function is as follows. Carboxyltransferase subunit of the 3-methylcrotonyl-CoA carboxylase, an enzyme that catalyzes the conversion of 3-methylcrotonyl-CoA to 3-methylglutaconyl-CoA, a critical step for leucine and isovaleric acid catabolism. In Mus musculus (Mouse), this protein is Methylcrotonoyl-CoA carboxylase beta chain, mitochondrial (Mccc2).